Consider the following 228-residue polypeptide: Sec-independent protein translocase protein TatB (228 aa).

The helical transmembrane segment at 1-21 threads the bilayer; it reads MFDFGLGELVFVGIIALIVLG. Disordered stretches follow at residues 109-162 and 197-228; these read DFGV…AETD and PHTTSLRKQAISRKRDFRPKHRAKPKLRVRKS. The span at 206-228 shows a compositional bias: basic residues; it reads AISRKRDFRPKHRAKPKLRVRKS.

It belongs to the TatB family. In terms of assembly, the Tat system comprises two distinct complexes: a TatABC complex, containing multiple copies of TatA, TatB and TatC subunits, and a separate TatA complex, containing only TatA subunits. Substrates initially bind to the TatABC complex, which probably triggers association of the separate TatA complex to form the active translocon.

The protein localises to the cell inner membrane. Functionally, part of the twin-arginine translocation (Tat) system that transports large folded proteins containing a characteristic twin-arginine motif in their signal peptide across membranes. Together with TatC, TatB is part of a receptor directly interacting with Tat signal peptides. TatB may form an oligomeric binding site that transiently accommodates folded Tat precursor proteins before their translocation. The chain is Sec-independent protein translocase protein TatB from Neisseria meningitidis serogroup B (strain ATCC BAA-335 / MC58).